A 325-amino-acid polypeptide reads, in one-letter code: Chain length determinant protein (325 aa).

The Cytoplasmic segment spans residues 1-31 (MRVENNNVSGQNHDPEQIDLIDLLVQLWRGK). The helical transmembrane segment at 32-52 (MTIIISVIVAIALAIGYLAVA) threads the bilayer. The Periplasmic portion of the chain corresponds to 53–294 (KEKWTSTAIV…LPIRRDSPKK (242 aa)). A helical transmembrane segment spans residues 295–315 (AITLILAVLLGGMVGAGIVLG). Topologically, residues 316 to 325 (RNALRNYNAK) are cytoplasmic.

This sequence belongs to the WzzB/Cld/Rol family.

It localises to the cell inner membrane. The protein operates within bacterial outer membrane biogenesis; lipopolysaccharide biosynthesis. Its function is as follows. Confers a modal distribution of chain length on the O-antigen component of lipopolysaccharide (LPS). Gives rise to a reduced number of short chain molecules and increases in numbers of longer molecules. The polypeptide is Chain length determinant protein (wzzB) (Shigella dysenteriae).